A 143-amino-acid chain; its full sequence is Peptide methionine sulfoxide reductase B9 (143 aa).

The MsrB domain occupies aspartate 19 to isoleucine 140. Positions 58, 61, 104, and 107 each coordinate Zn(2+). Cysteine 76 and cysteine 129 are disulfide-bonded. Cysteine 129 serves as the catalytic Nucleophile.

This sequence belongs to the MsrB Met sulfoxide reductase family. The cofactor is Zn(2+).

The protein resides in the cytoplasm. It localises to the cytosol. It carries out the reaction L-methionyl-[protein] + [thioredoxin]-disulfide + H2O = L-methionyl-(R)-S-oxide-[protein] + [thioredoxin]-dithiol. Catalyzes the reduction of methionine sulfoxide (MetSO) to methionine in proteins. Plays a protective role against oxidative stress by restoring activity to proteins that have been inactivated by methionine oxidation. MSRB family specifically reduces the MetSO R-enantiomer. The protein is Peptide methionine sulfoxide reductase B9 (MSRB9) of Arabidopsis thaliana (Mouse-ear cress).